The following is a 250-amino-acid chain: Phosphonates import ATP-binding protein PhnC (250 aa).

The 246-residue stretch at Ile-2 to Ile-247 folds into the ABC transporter domain. Gly-35–Thr-42 contributes to the ATP binding site.

This sequence belongs to the ABC transporter superfamily. Phosphonates importer (TC 3.A.1.9.1) family. As to quaternary structure, the complex is composed of two ATP-binding proteins (PhnC), two transmembrane proteins (PhnE) and a solute-binding protein (PhnD).

The protein resides in the cell membrane. It catalyses the reaction phosphonate(out) + ATP + H2O = phosphonate(in) + ADP + phosphate + H(+). Part of the ABC transporter complex PhnCDE involved in phosphonates import. Responsible for energy coupling to the transport system. This chain is Phosphonates import ATP-binding protein PhnC, found in Mycoplasma mycoides subsp. mycoides SC (strain CCUG 32753 / NCTC 10114 / PG1).